A 261-amino-acid polypeptide reads, in one-letter code: Small ribosomal subunit protein uS2 (261 aa).

The protein belongs to the universal ribosomal protein uS2 family.

The chain is Small ribosomal subunit protein uS2 from Thermodesulfovibrio yellowstonii (strain ATCC 51303 / DSM 11347 / YP87).